Reading from the N-terminus, the 623-residue chain is Phosphoglucomutase, chloroplastic (623 aa).

The N-terminal 63 residues, 1 to 63 (MTSTYTRFDT…SSSSSSVVAG (63 aa)), are a transit peptide targeting the chloroplast. The alpha-D-glucose 1,6-bisphosphate site is built by Arg88 and Ser181. Catalysis depends on Ser181, which acts as the Phosphoserine intermediate. Mg(2+) is bound by residues Ser181, Asp346, Asp348, and Asp350. Ser181 carries the post-translational modification Phosphoserine. Alpha-D-glucose 1,6-bisphosphate contacts are provided by Asp350, Arg351, Thr414, Glu433, Ser435, and Lys446.

This sequence belongs to the phosphohexose mutase family. As to quaternary structure, monomer. Requires Mg(2+) as cofactor. In terms of tissue distribution, expressed in flowers, siliques and germinating seeds.

The protein resides in the plastid. It localises to the chloroplast. The catalysed reaction is alpha-D-glucose 1-phosphate = alpha-D-glucose 6-phosphate. The enzyme catalyses O-phospho-L-seryl-[protein] + alpha-D-glucose 1-phosphate = alpha-D-glucose 1,6-bisphosphate + L-seryl-[protein]. It carries out the reaction alpha-D-glucose 1,6-bisphosphate + L-seryl-[protein] = O-phospho-L-seryl-[protein] + alpha-D-glucose 6-phosphate. Inhibited by the Calvin cycle intermediates fructose-1,6-bisphosphate and ribulose-1,5-bisphosphate. Catalyzes the reversible isomerization of alpha-D-glucose 1-phosphate to alpha-D-glucose 6-phosphate. The mechanism proceeds via the intermediate compound alpha-D-glucose 1,6-bisphosphate. This enzyme participates in both the breakdown and synthesis of glucose. Factor that affects seed oil content. Accumulated starch in young embryos may play an important role in providing carbon resources for seed storage lipid biosynthesis in oilseed plants. Promotes gravitropic responses, negative in shoots but positive in roots, by facilitating starch granules (statoliths) formation in hypocotyls and roots columella. The sequence is that of Phosphoglucomutase, chloroplastic from Arabidopsis thaliana (Mouse-ear cress).